We begin with the raw amino-acid sequence, 116 residues long: Large ribosomal subunit protein bL17 (116 aa).

Belongs to the bacterial ribosomal protein bL17 family. As to quaternary structure, part of the 50S ribosomal subunit. Contacts protein L32.

In Deinococcus geothermalis (strain DSM 11300 / CIP 105573 / AG-3a), this protein is Large ribosomal subunit protein bL17.